Consider the following 190-residue polypeptide: dCTP deaminase (190 aa).

DCTP is bound at residue 113–118 (KSTYAR). Glu139 serves as the catalytic Proton donor/acceptor. The dCTP site is built by Gln158, Tyr172, Lys181, and Gln182.

Belongs to the dCTP deaminase family. Homotrimer.

It catalyses the reaction dCTP + H2O + H(+) = dUTP + NH4(+). The protein operates within pyrimidine metabolism; dUMP biosynthesis; dUMP from dCTP (dUTP route): step 1/2. Catalyzes the deamination of dCTP to dUTP. In Chlamydia felis (strain Fe/C-56) (Chlamydophila felis), this protein is dCTP deaminase.